The following is a 486-amino-acid chain: Amyloid-beta A4 precursor protein-binding family B member 3 (486 aa).

A WW domain is found at T29–W61. PID domains lie at E113 to L280 and S285 to S440. The segment at T438–A460 is disordered.

Interacts with APP (via intracellular domain). Interacts with APLP1 and APLP2 (via intracellular domain).

The protein localises to the cytoplasm. The protein resides in the nucleus. Its function is as follows. May modulate the internalization of amyloid-beta precursor protein. The polypeptide is Amyloid-beta A4 precursor protein-binding family B member 3 (Mus musculus (Mouse)).